Here is a 252-residue protein sequence, read N- to C-terminus: 5'-nucleotidase SurE (252 aa).

Asp8, Asp9, Ser40, and Asn92 together coordinate a divalent metal cation.

Belongs to the SurE nucleotidase family. A divalent metal cation serves as cofactor.

It is found in the cytoplasm. It catalyses the reaction a ribonucleoside 5'-phosphate + H2O = a ribonucleoside + phosphate. Nucleotidase that shows phosphatase activity on nucleoside 5'-monophosphates. In Chelativorans sp. (strain BNC1), this protein is 5'-nucleotidase SurE.